A 340-amino-acid chain; its full sequence is NAC domain-containing protein 89 (340 aa).

The NAC domain occupies 21 to 164; the sequence is VFPGFKFSPT…AMVVCRVRRN (144 aa). A DNA-binding region spans residues 119–170; that stretch reads IGTKRTLVFHIGRAPKGERTDWIMHEYCVKGVSLDDAMVVCRVRRNKEYNSG. Polar residues predominate over residues 167–181; the sequence is YNSGTSQKAPKPNSS. Residues 167–198 form a disordered region; it reads YNSGTSQKAPKPNSSAEKHAKVQNGATSSGSP.

As to quaternary structure, interacts with PAS1.

The protein localises to the cytoplasm. Its subcellular location is the nucleus. Transcription factor involved in plant cell division. This Arabidopsis thaliana (Mouse-ear cress) protein is NAC domain-containing protein 89 (NAC089).